Consider the following 486-residue polypeptide: tRNA sulfurtransferase (486 aa).

Residues 63–167 enclose the THUMP domain; the sequence is DAFAERLGCI…HEKLYMVVRR (105 aa). ATP contacts are provided by residues 185–186, Lys-267, Gly-289, and Gln-298; that span reads LI. Cysteines 346 and 460 form a disulfide. The Rhodanese domain maps to 408 to 486; sequence VDTQEVVIDI…GYTNVKVYRP (79 aa). Cys-460 (cysteine persulfide intermediate) is an active-site residue.

This sequence belongs to the ThiI family.

It is found in the cytoplasm. The enzyme catalyses [ThiI sulfur-carrier protein]-S-sulfanyl-L-cysteine + a uridine in tRNA + 2 reduced [2Fe-2S]-[ferredoxin] + ATP + H(+) = [ThiI sulfur-carrier protein]-L-cysteine + a 4-thiouridine in tRNA + 2 oxidized [2Fe-2S]-[ferredoxin] + AMP + diphosphate. It carries out the reaction [ThiS sulfur-carrier protein]-C-terminal Gly-Gly-AMP + S-sulfanyl-L-cysteinyl-[cysteine desulfurase] + AH2 = [ThiS sulfur-carrier protein]-C-terminal-Gly-aminoethanethioate + L-cysteinyl-[cysteine desulfurase] + A + AMP + 2 H(+). It participates in cofactor biosynthesis; thiamine diphosphate biosynthesis. Catalyzes the ATP-dependent transfer of a sulfur to tRNA to produce 4-thiouridine in position 8 of tRNAs, which functions as a near-UV photosensor. Also catalyzes the transfer of sulfur to the sulfur carrier protein ThiS, forming ThiS-thiocarboxylate. This is a step in the synthesis of thiazole, in the thiamine biosynthesis pathway. The sulfur is donated as persulfide by IscS. This Shewanella denitrificans (strain OS217 / ATCC BAA-1090 / DSM 15013) protein is tRNA sulfurtransferase.